The primary structure comprises 131 residues: MKIALIAHDKKKDDMVSFAYAYKPIFEQHELFATGTTGLRVMEATGLAVTRYQSGPLGGDQEIGAMIAKNALDMVIFFRDPLTAQPHEPDVNALLRLCDVYAIPLATNMASAEMLMHALNRGDLDYRKFRK.

Positions 1–131 constitute an MGS-like domain; the sequence is MKIALIAHDK…GDLDYRKFRK (131 aa). Residues H8, K12, 34–37, and 54–55 contribute to the substrate site; these read TGTT and SG. D60 serves as the catalytic Proton donor/acceptor. H87 is a binding site for substrate.

This sequence belongs to the methylglyoxal synthase family.

It catalyses the reaction dihydroxyacetone phosphate = methylglyoxal + phosphate. Its function is as follows. Catalyzes the formation of methylglyoxal from dihydroxyacetone phosphate. The protein is Methylglyoxal synthase of Bacillus cytotoxicus (strain DSM 22905 / CIP 110041 / 391-98 / NVH 391-98).